Here is a 636-residue protein sequence, read N- to C-terminus: Golgin subfamily A member 8F (636 aa).

Disordered stretches follow at residues 1–72 (MAEE…SATL) and 107–127 (NKQVEHQLEEEKKANNEKQKA). The span at 38–50 (TNGSIHETATSGG) shows a compositional bias: polar residues. Coiled-coil stretches lie at residues 93 to 148 (VSQL…LNTD), 211 to 263 (LEQS…MSQE), and 306 to 412 (EVEL…QQKQ). Basic and acidic residues predominate over residues 109–127 (QVEHQLEEEKKANNEKQKA). 4 disordered regions span residues 344–364 (LREQEERLQEQQERLPEQEER), 422–449 (ALPGEGDGGGHLDSEGEEAPRPIPSIPQ), 496–537 (PITK…GVAA), and 588–612 (PVQGEAREGSPHDNPTAQPIVQDHQ). Basic and acidic residues predominate over residues 429 to 441 (GGGHLDSEGEEAP). Residues 509–522 (PGGGHHQAGPGQGG) show a composition bias toward gly residues.

Belongs to the GOLGA8 family.

In Homo sapiens (Human), this protein is Golgin subfamily A member 8F.